The sequence spans 154 residues: Ribosomal RNA large subunit methyltransferase H (154 aa).

Residues Leu-70, Gly-102, and 121-126 each bind S-adenosyl-L-methionine; that span reads LSRLTF.

Belongs to the RNA methyltransferase RlmH family. Homodimer.

The protein localises to the cytoplasm. It catalyses the reaction pseudouridine(1915) in 23S rRNA + S-adenosyl-L-methionine = N(3)-methylpseudouridine(1915) in 23S rRNA + S-adenosyl-L-homocysteine + H(+). Specifically methylates the pseudouridine at position 1915 (m3Psi1915) in 23S rRNA. This chain is Ribosomal RNA large subunit methyltransferase H, found in Geobacter metallireducens (strain ATCC 53774 / DSM 7210 / GS-15).